The sequence spans 463 residues: Adenylosuccinate synthetase, chloroplastic (463 aa).

GTP is bound by residues 44–50 (GDEGKGK) and 72–74 (GHT). D45 acts as the Proton acceptor in catalysis. Mg(2+) is bound by residues D45 and G72. IMP contacts are provided by residues 45 to 48 (DEGK), 70 to 73 (NAGH), T164, R178, N256, T271, and R335. H73 functions as the Proton donor in the catalytic mechanism. 331 to 337 (TTTGRPR) contributes to the substrate binding site. GTP contacts are provided by residues R337, 363–365 (KLD), and 446–448 (GVG).

This sequence belongs to the adenylosuccinate synthetase family. As to quaternary structure, homodimer. The cofactor is Mg(2+).

The protein resides in the plastid. The protein localises to the chloroplast. The catalysed reaction is IMP + L-aspartate + GTP = N(6)-(1,2-dicarboxyethyl)-AMP + GDP + phosphate + 2 H(+). The protein operates within purine metabolism; AMP biosynthesis via de novo pathway; AMP from IMP: step 1/2. Functionally, plays an important role in the de novo pathway and in the salvage pathway of purine nucleotide biosynthesis. Catalyzes the first committed step in the biosynthesis of AMP from IMP. This Chlamydomonas reinhardtii (Chlamydomonas smithii) protein is Adenylosuccinate synthetase, chloroplastic.